We begin with the raw amino-acid sequence, 265 residues long: Thiazole synthase (265 aa).

The active-site Schiff-base intermediate with DXP is lysine 103. Residues glycine 164, 190–191 (AG), and 212–213 (NT) each bind 1-deoxy-D-xylulose 5-phosphate.

Belongs to the ThiG family. In terms of assembly, homotetramer. Forms heterodimers with either ThiH or ThiS.

The protein resides in the cytoplasm. The enzyme catalyses [ThiS sulfur-carrier protein]-C-terminal-Gly-aminoethanethioate + 2-iminoacetate + 1-deoxy-D-xylulose 5-phosphate = [ThiS sulfur-carrier protein]-C-terminal Gly-Gly + 2-[(2R,5Z)-2-carboxy-4-methylthiazol-5(2H)-ylidene]ethyl phosphate + 2 H2O + H(+). It participates in cofactor biosynthesis; thiamine diphosphate biosynthesis. In terms of biological role, catalyzes the rearrangement of 1-deoxy-D-xylulose 5-phosphate (DXP) to produce the thiazole phosphate moiety of thiamine. Sulfur is provided by the thiocarboxylate moiety of the carrier protein ThiS. In vitro, sulfur can be provided by H(2)S. This is Thiazole synthase from Bordetella bronchiseptica (strain ATCC BAA-588 / NCTC 13252 / RB50) (Alcaligenes bronchisepticus).